Consider the following 267-residue polypeptide: Undecaprenyl-diphosphatase (267 aa).

7 helical membrane-spanning segments follow: residues 1–21 (MSLFHLILVALIQGITEFLPV), 40–60 (GQVIDVAVHVGTLGAVVLYFW), 85–105 (LAMGLIVATIPTVLAGAALHF), 111–131 (ALRSITVIGWTMLLFGLLLWW), 190–210 (MLMSIPTIIASGVLLGADVAV), 219–239 (DGAIAAAFAFVSALLALSLMM), and 245–265 (VSFTPYVIYRLALGLVLLGIA).

It belongs to the UppP family.

The protein localises to the cell inner membrane. It catalyses the reaction di-trans,octa-cis-undecaprenyl diphosphate + H2O = di-trans,octa-cis-undecaprenyl phosphate + phosphate + H(+). Catalyzes the dephosphorylation of undecaprenyl diphosphate (UPP). Confers resistance to bacitracin. The polypeptide is Undecaprenyl-diphosphatase (Ruegeria pomeroyi (strain ATCC 700808 / DSM 15171 / DSS-3) (Silicibacter pomeroyi)).